The primary structure comprises 109 residues: Nucleoid-associated protein CGSHiEE_00780 (109 aa).

The protein belongs to the YbaB/EbfC family. As to quaternary structure, homodimer.

The protein resides in the cytoplasm. The protein localises to the nucleoid. Its function is as follows. Binds to DNA and alters its conformation. May be involved in regulation of gene expression, nucleoid organization and DNA protection. The sequence is that of Nucleoid-associated protein CGSHiEE_00780 from Haemophilus influenzae (strain PittEE).